Here is a 69-residue protein sequence, read N- to C-terminus: Parvalbumin beta 3 (69 aa).

An N-acetylalanine modification is found at Ala-1. An EF-hand domain is found at 24–59 (FNYKTFFKFFAIIDQDHSGFIEEEELKLFLQTFSAG). Ca(2+) is bound by residues Asp-37, Asp-39, Ser-41, Phe-43, Glu-45, and Glu-48.

It belongs to the parvalbumin family.

In muscle, parvalbumin is thought to be involved in relaxation after contraction. It binds two calcium ions. The protein is Parvalbumin beta 3 of Merluccius polli (Benguela hake).